Reading from the N-terminus, the 373-residue chain is Chaperone protein DnaJ (373 aa).

In terms of domain architecture, J spans 5–70; it reads DYYEVLGVNR…QKRAAYDQYG (66 aa). The segment at 133-211 adopts a CR-type zinc-finger fold; sequence GTETKIRIPV…CHGGGRVKQH (79 aa). Positions 146, 149, 163, 166, 185, 188, 199, and 202 each coordinate Zn(2+). 4 CXXCXGXG motif repeats span residues 146–153, 163–170, 185–192, and 199–206; these read CETCHGSG, CSTCGGHG, CPKCHGSG, and CPTCHGGG. The tract at residues 346–373 is disordered; it reads LEDINQQDSGKHSPREKSWMTKVKDFFQ. The span at 354 to 373 shows a compositional bias: basic and acidic residues; it reads SGKHSPREKSWMTKVKDFFQ.

This sequence belongs to the DnaJ family. Homodimer. Zn(2+) is required as a cofactor.

The protein resides in the cytoplasm. In terms of biological role, participates actively in the response to hyperosmotic and heat shock by preventing the aggregation of stress-denatured proteins and by disaggregating proteins, also in an autonomous, DnaK-independent fashion. Unfolded proteins bind initially to DnaJ; upon interaction with the DnaJ-bound protein, DnaK hydrolyzes its bound ATP, resulting in the formation of a stable complex. GrpE releases ADP from DnaK; ATP binding to DnaK triggers the release of the substrate protein, thus completing the reaction cycle. Several rounds of ATP-dependent interactions between DnaJ, DnaK and GrpE are required for fully efficient folding. Also involved, together with DnaK and GrpE, in the DNA replication of plasmids through activation of initiation proteins. The polypeptide is Chaperone protein DnaJ (Methylobacillus flagellatus (strain ATCC 51484 / DSM 6875 / VKM B-1610 / KT)).